We begin with the raw amino-acid sequence, 213 residues long: Phycocyanobilin lyase subunit beta (213 aa).

This sequence belongs to the CpcE/RpcE/PecE family. In terms of assembly, cpcE and CpcF associate to form a lyase.

Required for the chromophorylation of the CpcA gene product. The polypeptide is Phycocyanobilin lyase subunit beta (cpcF) (Thermosynechococcus vestitus (strain NIES-2133 / IAM M-273 / BP-1)).